A 342-amino-acid polypeptide reads, in one-letter code: Acetoin:2,6-dichlorophenolindophenol oxidoreductase subunit beta (342 aa).

Tetramer of 2 alpha and 2 beta subunits.

It functions in the pathway ketone degradation; acetoin degradation. Functionally, catalyzes the 2,6-dichlorophenolindophenol-dependent cleavage of acetoin into acetate and acetaldehyde. In Bacillus subtilis (strain 168), this protein is Acetoin:2,6-dichlorophenolindophenol oxidoreductase subunit beta (acoB).